Here is a 529-residue protein sequence, read N- to C-terminus: Bifunctional purine biosynthesis protein PurH (529 aa).

An MGS-like domain is found at 1–148 (MNNARPIRRA…KNHKDTTIIV (148 aa)).

The protein belongs to the PurH family.

The catalysed reaction is (6R)-10-formyltetrahydrofolate + 5-amino-1-(5-phospho-beta-D-ribosyl)imidazole-4-carboxamide = 5-formamido-1-(5-phospho-D-ribosyl)imidazole-4-carboxamide + (6S)-5,6,7,8-tetrahydrofolate. It catalyses the reaction IMP + H2O = 5-formamido-1-(5-phospho-D-ribosyl)imidazole-4-carboxamide. It functions in the pathway purine metabolism; IMP biosynthesis via de novo pathway; 5-formamido-1-(5-phospho-D-ribosyl)imidazole-4-carboxamide from 5-amino-1-(5-phospho-D-ribosyl)imidazole-4-carboxamide (10-formyl THF route): step 1/1. The protein operates within purine metabolism; IMP biosynthesis via de novo pathway; IMP from 5-formamido-1-(5-phospho-D-ribosyl)imidazole-4-carboxamide: step 1/1. This is Bifunctional purine biosynthesis protein PurH from Shewanella halifaxensis (strain HAW-EB4).